Reading from the N-terminus, the 169-residue chain is MKVFLGLLLGFSIILILTYQSPTTQHPPKEELAYWCTYAKSCDFCWDCQNDTCINKVINESISITSIVNCRVTRDSQSCFYDISVKIPNHHSMECSYPRLYEHEMFMEKWRDEYWPIIIKQCCFYLVFSFAFAGCVAFAICKNLRLRTTIKLLILLSILVWLSQPILNN.

3 consecutive transmembrane segments (helical) span residues 2–20 (KVFLGLLLGFSIILILTYQ), 121–141 (QCCFYLVFSFAFAGCVAFAIC), and 148–168 (TTIKLLILLSILVWLSQPILN).

This sequence belongs to the asfivirus MGF 110 family.

It is found in the host membrane. Plays a role in virus cell tropism, and may be required for efficient virus replication in macrophages. This chain is Protein MGF 110-12L, found in African swine fever virus (isolate Pig/Kenya/KEN-50/1950) (ASFV).